The sequence spans 352 residues: Heat-inducible transcription repressor HrcA (352 aa).

This sequence belongs to the HrcA family.

Negative regulator of class I heat shock genes (grpE-dnaK-dnaJ and groELS operons). Prevents heat-shock induction of these operons. This is Heat-inducible transcription repressor HrcA from Lactobacillus gasseri (strain ATCC 33323 / DSM 20243 / BCRC 14619 / CIP 102991 / JCM 1131 / KCTC 3163 / NCIMB 11718 / NCTC 13722 / AM63).